Reading from the N-terminus, the 212-residue chain is Transmembrane protein 186 (212 aa).

Residues 1–78 (MAAVLRAVAR…YLSRLKVAQT (78 aa)) are Mitochondrial matrix-facing. A helical membrane pass occupies residues 79–99 (ALTVAALPPGLYCYSQGLMPF). The Mitochondrial intermembrane portion of the chain corresponds to 100–101 (SS). Residues 102–122 (LCLAGGVAGFALAMLCWMSHF) traverse the membrane as a helical segment. At 123–212 (FRRLVGILYV…QVFGVLDALK (90 aa)) the chain is on the mitochondrial matrix side.

It belongs to the TMEM186 family. Part of the mitochondrial complex I assembly/MCIA complex that comprises at least the core subunits TMEM126B, NDUFAF1, ECSIT and ACAD9 and complement subunits such as COA1 and TMEM186. Interacts with MT-ND3.

The protein resides in the mitochondrion inner membrane. In terms of biological role, as part of the MCIA complex, required for efficient assembly of the mitochondrial complex I. This Bos taurus (Bovine) protein is Transmembrane protein 186.